We begin with the raw amino-acid sequence, 323 residues long: 1D-myo-inositol 2-acetamido-2-deoxy-alpha-D-glucopyranoside deacetylase 1 (323 aa).

3 residues coordinate Zn(2+): histidine 30, aspartate 33, and histidine 165.

Belongs to the MshB deacetylase family. Requires Zn(2+) as cofactor.

It carries out the reaction 1D-myo-inositol 2-acetamido-2-deoxy-alpha-D-glucopyranoside + H2O = 1D-myo-inositol 2-amino-2-deoxy-alpha-D-glucopyranoside + acetate. Its function is as follows. Catalyzes the deacetylation of 1D-myo-inositol 2-acetamido-2-deoxy-alpha-D-glucopyranoside (GlcNAc-Ins) in the mycothiol biosynthesis pathway. In Catenulispora acidiphila (strain DSM 44928 / JCM 14897 / NBRC 102108 / NRRL B-24433 / ID139908), this protein is 1D-myo-inositol 2-acetamido-2-deoxy-alpha-D-glucopyranoside deacetylase 1.